The sequence spans 276 residues: 4-deoxy-L-threo-5-hexosulose-uronate ketol-isomerase (276 aa).

Residues histidine 194, histidine 196, glutamate 201, and histidine 243 each coordinate Zn(2+).

This sequence belongs to the KduI family. It depends on Zn(2+) as a cofactor.

It carries out the reaction 5-dehydro-4-deoxy-D-glucuronate = 3-deoxy-D-glycero-2,5-hexodiulosonate. The protein operates within glycan metabolism; pectin degradation; 2-dehydro-3-deoxy-D-gluconate from pectin: step 4/5. Its function is as follows. Catalyzes the isomerization of 5-dehydro-4-deoxy-D-glucuronate to 3-deoxy-D-glycero-2,5-hexodiulosonate. The chain is 4-deoxy-L-threo-5-hexosulose-uronate ketol-isomerase from Lachnoclostridium phytofermentans (strain ATCC 700394 / DSM 18823 / ISDg) (Clostridium phytofermentans).